Consider the following 403-residue polypeptide: Peroxisomal membrane protein PEX13 (403 aa).

Residues 1 to 11 are compositionally biased toward pro residues; sequence MASQPPPPPKP. The segment at 1 to 69 is disordered; the sequence is MASQPPPPPK…SQQTGSGNLN (69 aa). The Peroxisomal matrix segment spans residues 1–134; sequence MASQPPPPPK…SSRGAFQSIE (134 aa). Positions 59–69 are enriched in polar residues; it reads PSQQTGSGNLN. A helical transmembrane segment spans residues 135-155; it reads SIVHAFASVSMMMDATFSAVY. Residues 145 to 233 are targeting to peroxisomes; sequence MMMDATFSAV…EDRAANSAKS (89 aa). Residues 156-174 lie on the Cytoplasmic side of the membrane; sequence NSFRAVLDVANHFSRLKIH. Residues 175 to 192 form a helical membrane-spanning segment; it reads FTKVFSAFALVRTIRYLY. Positions 175–196 are interaction with PEX19; the sequence is FTKVFSAFALVRTIRYLYRRLQ. At 193-233 the chain is on the peroxisomal matrix side; that stretch reads RRLQWMIGLRRGLENEDLWAESEGTVACLGAEDRAANSAKS. Residues 234 to 254 form a helical membrane-spanning segment; it reads WPIFLFFAVILGGPYLIWKLL. The Cytoplasmic portion of the chain corresponds to 255–403; the sequence is STHSDEVTDS…TGKNGDKQDL (149 aa). The region spanning 272-336 is the SH3 domain; the sequence is DDHVVARAEY…PANYVKILGK (65 aa). Phosphoserine is present on Ser354.

The protein belongs to the peroxin-13 family. As to quaternary structure, interacts (via SH3 domain) with PEX14 (via SH3-binding motif); forming the PEX13-PEX14 docking complex. Interacts with PEX19.

The protein resides in the peroxisome membrane. In terms of biological role, component of the PEX13-PEX14 docking complex, a translocon channel that specifically mediates the import of peroxisomal cargo proteins bound to PEX5 receptor. The PEX13-PEX14 docking complex forms a large import pore which can be opened to a diameter of about 9 nm. Mechanistically, PEX5 receptor along with cargo proteins associates with the PEX14 subunit of the PEX13-PEX14 docking complex in the cytosol, leading to the insertion of the receptor into the organelle membrane with the concomitant translocation of the cargo into the peroxisome matrix. Involved in the import of PTS1- and PTS2-type containing proteins. In Bos taurus (Bovine), this protein is Peroxisomal membrane protein PEX13 (PEX13).